A 410-amino-acid chain; its full sequence is 3-phosphoshikimate 1-carboxyvinyltransferase (410 aa).

3 residues coordinate 3-phosphoshikimate: K21, S22, and R26. Residue K21 coordinates phosphoenolpyruvate. G69 and R97 together coordinate phosphoenolpyruvate. 6 residues coordinate 3-phosphoshikimate: S143, S144, Q145, S171, D288, and K315. Q145 lines the phosphoenolpyruvate pocket. Catalysis depends on D288, which acts as the Proton acceptor. R319, R364, and K389 together coordinate phosphoenolpyruvate.

It belongs to the EPSP synthase family. As to quaternary structure, monomer.

It localises to the cytoplasm. It carries out the reaction 3-phosphoshikimate + phosphoenolpyruvate = 5-O-(1-carboxyvinyl)-3-phosphoshikimate + phosphate. It participates in metabolic intermediate biosynthesis; chorismate biosynthesis; chorismate from D-erythrose 4-phosphate and phosphoenolpyruvate: step 6/7. Its function is as follows. Catalyzes the transfer of the enolpyruvyl moiety of phosphoenolpyruvate (PEP) to the 5-hydroxyl of shikimate-3-phosphate (S3P) to produce enolpyruvyl shikimate-3-phosphate and inorganic phosphate. The protein is 3-phosphoshikimate 1-carboxyvinyltransferase of Bacteroides fragilis (strain ATCC 25285 / DSM 2151 / CCUG 4856 / JCM 11019 / LMG 10263 / NCTC 9343 / Onslow / VPI 2553 / EN-2).